The chain runs to 581 residues: Spastin (581 aa).

A compositionally biased stretch (basic residues) spans 1–12 (MSSPAGRRKKKG). Residues 1–39 (MSSPAGRRKKKGSGGASPAPARPPPPAAVPAPAAGPAPA) are disordered. Residues 1 to 48 (MSSPAGRRKKKGSGGASPAPARPPPPAAVPAPAAGPAPAPGSPHKRNL) form a required for nuclear localization region. Residues 1 to 54 (MSSPAGRRKKKGSGGASPAPARPPPPAAVPAPAAGPAPAPGSPHKRNLYYFSYP) lie on the Cytoplasmic side of the membrane. Residues 1 to 78 (MSSPAGRRKK…LGLLFVWLCQ (78 aa)) form a required for interaction with ATL1 region. The segment at 1-191 (MSSPAGRRKK…LVMAKDRLQL (191 aa)) is required for midbody localization. A required for interaction with RTN1 region spans residues 1–265 (MSSPAGRRKK…GTSKPNRTNK (265 aa)). A Nuclear localization signal motif is present at residues 4–11 (PAGRRKKK). The span at 20–39 (PARPPPPAAVPAPAAGPAPA) shows a compositional bias: pro residues. The segment at 48 to 85 (LYYFSYPLVVGFALLRLLACHLGLLFVWLCQRFSRALM) is required for interaction with SSNA1 and microtubules. The segment at residues 55 to 75 (LVVGFALLRLLACHLGLLFVW) is an intramembrane region (helical). The short motif at 57–65 (VGFALLRLL) is the Nuclear export signal element. Residues 76–581 (LCQRFSRALM…WNKDFGDTTV (506 aa)) are Cytoplasmic-facing. The interval 90–111 (SSGTAPAPASPSTPAPGPGGEA) is disordered. Over residues 97–106 (PASPSTPAPG) the composition is skewed to pro residues. Residues 118–192 (HKQAFEYISI…VMAKDRLQLL (75 aa)) form the MIT domain. A sufficient for microtubule severing region spans residues 193–581 (ESGAVPKKKD…WNKDFGDTTV (389 aa)). Residues 195–277 (GAVPKKKDPL…TPTTAVRKKK (83 aa)) are disordered. Residues 206–225 (HASNSLPRSKTVMKSGSTGL) show a composition bias toward polar residues. 2 positions are modified to phosphoserine: serine 210 and serine 233. Residues 235–293 (SGLSMVSGARPGSGPAATTHKGTSKPNRTNKPSTPTTAVRKKKDLKNFRNVDSNLANLI) form a required for interaction with microtubules and microtubule severing region. The segment covering 254 to 271 (HKGTSKPNRTNKPSTPTT) has biased composition (polar residues). Threonine 271 carries the phosphothreonine modification. The Nuclear localization signal motif lies at 274 to 277 (RKKK). 347-354 (GPPGNGKT) contributes to the ATP binding site. Serine 562 bears the Phosphoserine mark.

The protein belongs to the AAA ATPase family. Spastin subfamily. As to quaternary structure, homohexamer. Mostly monomeric, but assembles into hexameric structure for short periods of time. Oligomerization seems to be a prerequisite for catalytic activity. Binding to ATP in a cleft between two adjacent subunits stabilizes the homohexameric form. Binds to microtubules at least in part via the alpha-tubulin and beta-tubulin tails. The hexamer adopts a ring conformation through which microtubules pass prior to being severed. Does not interact strongly with tubulin heterodimers. Interacts (via MIT domain) with CHMP1B; the interaction is direct. Interacts with SSNA1. Interacts with ATL1. Interacts with RTN1. Interacts with ZFYVE27. Interacts with REEP1. Interacts (via MIT domain) with IST1.

It localises to the membrane. The protein localises to the endoplasmic reticulum. It is found in the midbody. The protein resides in the cytoplasm. Its subcellular location is the cytoskeleton. It localises to the microtubule organizing center. The protein localises to the centrosome. It is found in the perinuclear region. The protein resides in the nucleus. Its subcellular location is the spindle. It localises to the cell projection. The protein localises to the axon. The enzyme catalyses n ATP + n H2O + a microtubule = n ADP + n phosphate + (n+1) alpha/beta tubulin heterodimers.. Its activity is regulated as follows. Allosteric enzyme with a cooperative mechanism; at least two neighbor subunits influence each other strongly in spastin hexamers. Microtubule binding promotes cooperative interactions among spastin subunits. Functionally, ATP-dependent microtubule severing protein that specifically recognizes and cuts microtubules that are polyglutamylated. Preferentially recognizes and acts on microtubules decorated with short polyglutamate tails: severing activity increases as the number of glutamates per tubulin rises from one to eight, but decreases beyond this glutamylation threshold. Severing activity is not dependent on tubulin acetylation or detyrosination. Microtubule severing promotes reorganization of cellular microtubule arrays and the release of microtubules from the centrosome following nucleation. It is critical for the biogenesis and maintenance of complex microtubule arrays in axons, spindles and cilia. SPAST is involved in abscission step of cytokinesis and nuclear envelope reassembly during anaphase in cooperation with the ESCRT-III complex. Recruited at the midbody, probably by IST1, and participates in membrane fission during abscission together with the ESCRT-III complex. Recruited to the nuclear membrane by IST1 and mediates microtubule severing, promoting nuclear envelope sealing and mitotic spindle disassembly during late anaphase. Required for membrane traffic from the endoplasmic reticulum (ER) to the Golgi and endosome recycling. Recruited by IST1 to endosomes and regulates early endosomal tubulation and recycling by mediating microtubule severing. Probably plays a role in axon growth and the formation of axonal branches. This is Spastin from Rattus norvegicus (Rat).